Here is a 322-residue protein sequence, read N- to C-terminus: UDP-N-acetylenolpyruvoylglucosamine reductase (322 aa).

Positions 36–202 (RAGGPAQVLF…TSVLFEGVPG (167 aa)) constitute an FAD-binding PCMH-type domain. R182 is a catalytic residue. S231 acts as the Proton donor in catalysis. Residue E301 is part of the active site.

The protein belongs to the MurB family. Requires FAD as cofactor.

It is found in the cytoplasm. It catalyses the reaction UDP-N-acetyl-alpha-D-muramate + NADP(+) = UDP-N-acetyl-3-O-(1-carboxyvinyl)-alpha-D-glucosamine + NADPH + H(+). It participates in cell wall biogenesis; peptidoglycan biosynthesis. Its function is as follows. Cell wall formation. The protein is UDP-N-acetylenolpyruvoylglucosamine reductase of Brucella melitensis biotype 2 (strain ATCC 23457).